A 556-amino-acid chain; its full sequence is Valencene synthase (556 aa).

Over residues 1-12 (MSTQVSASSLAQ) the composition is skewed to polar residues. Residues 1-24 (MSTQVSASSLAQIPQPKNRPVANF) are disordered. 3 residues coordinate Mg(2+): aspartate 310, aspartate 314, and glutamate 462. The DDXXD motif signature appears at 310 to 314 (DDIHD).

This sequence belongs to the terpene synthase family. Tpsa subfamily. Requires Mg(2+) as cofactor. As to expression, expressed in flowers and anthers. Detected inside the pollen grains, but not in stems, leaves, tendrils, roots, seeds, pistils or caps.

Its subcellular location is the cytoplasm. It catalyses the reaction (2E,6E)-farnesyl diphosphate = (+)-valencene + diphosphate. It carries out the reaction (2E,6E)-farnesyl diphosphate = (-)-7-epi-alpha-selinene + diphosphate. Its pathway is secondary metabolite biosynthesis; terpenoid biosynthesis. Its function is as follows. Involved in the biosynthesis of valencene, a major volatile emitted from flowers of grapevine. Can use farnesyl diphosphate as substrate, but not geranyl diphosphate or geranylgeranyl diphosphate. Produces mainly (+)-valencene and (-)-7-epi-alpha-selinene along with five minor products. In Vitis vinifera (Grape), this protein is Valencene synthase (ValCS).